Here is a 931-residue protein sequence, read N- to C-terminus: MASPGIEVELLGKGHSDLGEVAPEIKASERRTAVAIADLEWREMEGDDCEFRYGDGTNEAQDNDFPTVERSRLQEMLSLLGLETYQVQKLSLQDSLQISFDSMKNWAPQVPKDLPWNFLRKLQALNADARNTTMVLDVLPDARPVEKESQMEEEIIYWDPADDLAADIYSFSELPTPDTPVNPLDLLCALLLSSDSFLQQEIALKMALCQFALPLVLPDSENHYHTFLLWAMRGIVRTWWSQPPRGMGSFREDSVVLSRAPAFAFVRMDVSSNSKSQLLNAVLSPGHRQWDCFWHRDLNLGTNAREISDGLVEISWFFPSGREDLDIFPEPVAFLNLRGDIGSHWLQFKLLTEISSAVFILTDNISKKEYKLLYSMKESTTKYYFILSPYRGKRNTNLRFLNKLIPVLKIDHSHVLVKVSSTDSDSFVKRIRAIVGNVLRAPCRRVSVEDMAHAARKLGLKVDEDCEECQKAKDRMERITRKIKDSDAYRRDELRLQGDPWRKAAQVEKEFCQLQWAVDPPEKHRAELRRRLLELRMQQNGHDPSSGVQEFISGISSPSLSEKQYFLRWMEWGLARVAQPRLRQPPETLLTLRPKHGGTTDVGEPLWPEPLGVEHFLREMGQFYEAESCLVEAGRLPAGQRRFAHFPGLASELLLTGLPLELIDGSTLSMPVRWVTGLLKELHVRLERRSRLVVLSTVGVPGTGKSTLLNTMFGLRFATGKSCGPRGAFMQLITVAEGFSQDLGCDHILVIDSGGLIGGALTSAGDRFELEASLATLLMGLSNVTVISLAETKDIPAAILHAFLRLEKTGHMPNYQFVYQNLHDVSVPGPRPRDKRQLLDPPGDLSRAAAQMEKQGDGFRALAGLAFCDPEKQHIWHIPGLWHGAPPMAAVSLAYSEAIFELKRCLLENIRNGLSNQNKNIQQLIELVRRL.

At Ser3 the chain carries Phosphoserine. The region spanning 689–929 is the VLIG-type G domain; that stretch reads RSRLVVLSTV…NIQQLIELVR (241 aa).

This sequence belongs to the TRAFAC class dynamin-like GTPase superfamily. Very large inducible GTPase (VLIG) family. In terms of tissue distribution, strongly expressed in hepatitis B virus-infected liver and in HCC cells. Also highly expressed in well-differentiated gastric cancer tissues and various gastric cancer cell lines.

It localises to the cytoplasm. It is found in the nucleus. May be involved in cell cycle progression through the regulation of cyclin D1 expression. May participate in the development of hepatocellular carcinoma (HCC) by promoting hepatocellular growth and survival. May play an important role in development of gastric cancer. The chain is Up-regulator of cell proliferation (URGCP) from Homo sapiens (Human).